The primary structure comprises 603 residues: Adenine deaminase (603 aa).

This sequence belongs to the metallo-dependent hydrolases superfamily. Adenine deaminase family. As to quaternary structure, homodimer. Requires Mn(2+) as cofactor.

It catalyses the reaction adenine + H2O + H(+) = hypoxanthine + NH4(+). This is Adenine deaminase from Klebsiella pneumoniae subsp. pneumoniae (strain ATCC 700721 / MGH 78578).